A 363-amino-acid polypeptide reads, in one-letter code: Chorismate synthase (363 aa).

Positions 48 and 54 each coordinate NADP(+). FMN is bound by residues 125–127 (RSS), 237–238 (NA), G277, 292–296 (KPTSS), and R318.

Belongs to the chorismate synthase family. Homotetramer. The cofactor is FMNH2.

It carries out the reaction 5-O-(1-carboxyvinyl)-3-phosphoshikimate = chorismate + phosphate. Its pathway is metabolic intermediate biosynthesis; chorismate biosynthesis; chorismate from D-erythrose 4-phosphate and phosphoenolpyruvate: step 7/7. Catalyzes the anti-1,4-elimination of the C-3 phosphate and the C-6 proR hydrogen from 5-enolpyruvylshikimate-3-phosphate (EPSP) to yield chorismate, which is the branch point compound that serves as the starting substrate for the three terminal pathways of aromatic amino acid biosynthesis. This reaction introduces a second double bond into the aromatic ring system. This chain is Chorismate synthase, found in Stutzerimonas stutzeri (strain A1501) (Pseudomonas stutzeri).